The primary structure comprises 623 residues: Chaperone protein DnaK (623 aa).

The residue at position 174 (T174) is a Phosphothreonine; by autocatalysis. Disordered stretches follow at residues I470–V504 and G578–K623. A compositionally biased stretch (basic and acidic residues) spans E481–V504. The segment covering G578–S604 has biased composition (low complexity). Residues G614–K623 show a composition bias toward basic and acidic residues.

Belongs to the heat shock protein 70 family.

Its function is as follows. Acts as a chaperone. In Lactobacillus gasseri (strain ATCC 33323 / DSM 20243 / BCRC 14619 / CIP 102991 / JCM 1131 / KCTC 3163 / NCIMB 11718 / NCTC 13722 / AM63), this protein is Chaperone protein DnaK.